The following is a 157-amino-acid chain: Transcription elongation factor GreA (157 aa).

The stretch at 14–37 (LREELDRLLKLRPKITEAIAEARE) forms a coiled coil.

The protein belongs to the GreA/GreB family.

In terms of biological role, necessary for efficient RNA polymerase transcription elongation past template-encoded arresting sites. The arresting sites in DNA have the property of trapping a certain fraction of elongating RNA polymerases that pass through, resulting in locked ternary complexes. Cleavage of the nascent transcript by cleavage factors such as GreA or GreB allows the resumption of elongation from the new 3'terminus. GreA releases sequences of 2 to 3 nucleotides. In Vibrio cholerae serotype O1 (strain ATCC 39315 / El Tor Inaba N16961), this protein is Transcription elongation factor GreA.